The sequence spans 363 residues: GDP-fucose transporter (363 aa).

8 helical membrane passes run 30-47 (VITAVSAYWVFSIGLVFL), 62-79 (FITWYQCLVTVFLCLFLS), 126-148 (VSFYYVGRSLTTVFNVVCTYLIL), 152-171 (TSGQAIGCCALIIFGFLLGV), 180-202 (LSYTGVIFGVLASLSVALNAIYT), 222-244 (LNALVLFLPLMLFNGEFGAVFYF), 251-273 (TFWILMTLGGVFGFMMGYVTGWQ), and 307-326 (LLWWTSNFVVLFGSGMYTYV). The disordered stretch occupies residues 334–363 (KNSGASPASEAKSDKVKLLGRDGNAAEESV). The segment covering 344–353 (AKSDKVKLLG) has biased composition (basic and acidic residues).

Belongs to the TPT transporter family. SLC35C subfamily.

Its subcellular location is the golgi apparatus membrane. Functionally, involved in GDP-fucose import from the cytoplasm into the Golgi lumen. The chain is GDP-fucose transporter from Caenorhabditis elegans.